We begin with the raw amino-acid sequence, 352 residues long: Keratocan (352 aa).

Positions 1 to 20 are cleaved as a signal peptide; that stretch reads MASTICFILWVVFVTDTVWT. Positions 33–71 constitute an LRRNT domain; it reads EDWTMHDFDCPRECFCPPSFPTALYCENRGLKEIPAIPS. 2 cysteine pairs are disulfide-bonded: C42-C48 and C46-C58. LRR repeat units follow at residues 72-93, 96-117, 122-142, 143-164, 167-180, 193-214, 215-235, and 238-258; these read RIWY…PFEN, QLRW…KGAL, KLLF…PLPR, SLEQ…TFSN, NLTL…KLLD, NLMQ…LPAN, TMQV…YFNV, and KVAF…PSSG. N93 carries an N-linked (GlcNAc...) (keratan sulfate) asparagine glycan. An N-linked (GlcNAc...) (keratan sulfate) asparagine glycan is attached at N167. N222 carries N-linked (GlcNAc...) asparagine glycosylation. The N-linked (GlcNAc...) (keratan sulfate) asparagine glycan is linked to N260. LRR repeat units follow at residues 263–282 and 283–304; these read SILD…KISA and HLQH…VICP. Residue N298 is glycosylated (N-linked (GlcNAc...) asparagine). A disulfide bridge connects residues C303 and C343.

Belongs to the small leucine-rich proteoglycan (SLRP) family. SLRP class II subfamily. Post-translationally, binds three long, highly sulfated keratan sulfate chains in the cornea but short, non-sulfated poly(N-acetyllactosamine) chains in other tissues. The N-terminus is blocked. In terms of tissue distribution, abundant in cornea and sclera but also found in other tissues.

It is found in the secreted. The protein localises to the extracellular space. It localises to the extracellular matrix. In terms of biological role, may be important in developing and maintaining corneal transparency and for the structure of the stromal matrix. In Bos taurus (Bovine), this protein is Keratocan (KERA).